Reading from the N-terminus, the 548-residue chain is Methyl-accepting chemotaxis protein HlyB (548 aa).

Residues 1–10 (MIINKFSLKW) are Cytoplasmic-facing. A helical membrane pass occupies residues 11–31 (MLAIAVAIPAIALLFVAFTSL). The Periplasmic segment spans residues 32–199 (NTMSVMQAQS…SFEAGRTKQM (168 aa)). The chain crosses the membrane as a helical span at residues 200-220 (VIIAAGLIISFITSLVIITNL). The HAMP domain maps to 218–271 (TNLRSRVAYLKDRMSSAAANLSLRTRLELDGNDELCDIGKSFNAFIDKVHHSIE). Residues 221-548 (RSRVAYLKDR…LDKLVGSFEL (328 aa)) lie on the Cytoplasmic side of the membrane. The Methyl-accepting transducer domain occupies 276 to 512 (NSKELATMAS…DINRNVEDIN (237 aa)).

It belongs to the methyl-accepting chemotaxis (MCP) protein family.

The protein localises to the cell inner membrane. Functionally, chemotactic-signal transducers respond to changes in the concentration of attractants and repellents in the environment, transduce a signal from the outside to the inside of the cell, and facilitate sensory adaptation through the variation of the level of methylation. In Vibrio cholerae serotype O1 (strain ATCC 39315 / El Tor Inaba N16961), this protein is Methyl-accepting chemotaxis protein HlyB (hlyB).